Here is a 97-residue protein sequence, read N- to C-terminus: UPF0235 protein PFL_5841 (97 aa).

Belongs to the UPF0235 family.

In Pseudomonas fluorescens (strain ATCC BAA-477 / NRRL B-23932 / Pf-5), this protein is UPF0235 protein PFL_5841.